We begin with the raw amino-acid sequence, 188 residues long: GTP cyclohydrolase 1 (188 aa).

Zn(2+)-binding residues include C78, H81, and C150.

This sequence belongs to the GTP cyclohydrolase I family. Homomer.

It catalyses the reaction GTP + H2O = 7,8-dihydroneopterin 3'-triphosphate + formate + H(+). Its pathway is cofactor biosynthesis; 7,8-dihydroneopterin triphosphate biosynthesis; 7,8-dihydroneopterin triphosphate from GTP: step 1/1. The sequence is that of GTP cyclohydrolase 1 from Geobacillus sp. (strain WCH70).